Reading from the N-terminus, the 155-residue chain is SsrA-binding protein (155 aa).

Residues 135–147 (TIKRRDQERDIKK) show a composition bias toward basic and acidic residues. Positions 135 to 155 (TIKRRDQERDIKKQMKHYNAR) are disordered.

Belongs to the SmpB family.

The protein resides in the cytoplasm. Its function is as follows. Required for rescue of stalled ribosomes mediated by trans-translation. Binds to transfer-messenger RNA (tmRNA), required for stable association of tmRNA with ribosomes. tmRNA and SmpB together mimic tRNA shape, replacing the anticodon stem-loop with SmpB. tmRNA is encoded by the ssrA gene; the 2 termini fold to resemble tRNA(Ala) and it encodes a 'tag peptide', a short internal open reading frame. During trans-translation Ala-aminoacylated tmRNA acts like a tRNA, entering the A-site of stalled ribosomes, displacing the stalled mRNA. The ribosome then switches to translate the ORF on the tmRNA; the nascent peptide is terminated with the 'tag peptide' encoded by the tmRNA and targeted for degradation. The ribosome is freed to recommence translation, which seems to be the essential function of trans-translation. This is SsrA-binding protein from Streptococcus pyogenes serotype M6 (strain ATCC BAA-946 / MGAS10394).